Here is a 467-residue protein sequence, read N- to C-terminus: Ribulose bisphosphate carboxylase large chain (467 aa).

Lys5 is modified (N6,N6,N6-trimethyllysine). Positions 114 and 164 each coordinate substrate. Lys166 functions as the Proton acceptor in the catalytic mechanism. A substrate-binding site is contributed by Lys168. Mg(2+)-binding residues include Lys192, Asp194, and Glu195. Lys192 bears the N6-carboxylysine mark. The active-site Proton acceptor is His285. Substrate-binding residues include Arg286, His318, and Ser370.

It belongs to the RuBisCO large chain family. Type I subfamily. As to quaternary structure, heterohexadecamer of 8 large chains and 8 small chains; disulfide-linked. The disulfide link is formed within the large subunit homodimers. Mg(2+) is required as a cofactor. The disulfide bond which can form in the large chain dimeric partners within the hexadecamer appears to be associated with oxidative stress and protein turnover.

It is found in the plastid. Its subcellular location is the chloroplast. It catalyses the reaction 2 (2R)-3-phosphoglycerate + 2 H(+) = D-ribulose 1,5-bisphosphate + CO2 + H2O. The enzyme catalyses D-ribulose 1,5-bisphosphate + O2 = 2-phosphoglycolate + (2R)-3-phosphoglycerate + 2 H(+). In terms of biological role, ruBisCO catalyzes two reactions: the carboxylation of D-ribulose 1,5-bisphosphate, the primary event in carbon dioxide fixation, as well as the oxidative fragmentation of the pentose substrate in the photorespiration process. Both reactions occur simultaneously and in competition at the same active site. This chain is Ribulose bisphosphate carboxylase large chain, found in Eriodictyon californicum (California yerba santa).